A 236-amino-acid chain; its full sequence is tRNA (guanine-N(1)-)-methyltransferase (236 aa).

S-adenosyl-L-methionine contacts are provided by residues Gly-113 and 133–138 (IGDYVL).

It belongs to the RNA methyltransferase TrmD family. As to quaternary structure, homodimer.

Its subcellular location is the cytoplasm. It catalyses the reaction guanosine(37) in tRNA + S-adenosyl-L-methionine = N(1)-methylguanosine(37) in tRNA + S-adenosyl-L-homocysteine + H(+). Specifically methylates guanosine-37 in various tRNAs. This chain is tRNA (guanine-N(1)-)-methyltransferase, found in Lachnospira eligens (strain ATCC 27750 / DSM 3376 / VPI C15-48 / C15-B4) (Eubacterium eligens).